A 188-amino-acid chain; its full sequence is Large ribosomal subunit protein eL18 (188 aa).

Lys119 is covalently cross-linked (Glycyl lysine isopeptide (Lys-Gly) (interchain with G-Cter in SUMO2)). Ser130 bears the Phosphoserine mark. The segment at 150-188 (RHFGKAPGTPHSHTKPYVRSKGRKFERARGRRASRGYKN) is disordered. Position 158 is a phosphothreonine (Thr158). Composition is skewed to basic residues over residues 161–171 (SHTKPYVRSKG) and 178–188 (RGRRASRGYKN). Lys164 is covalently cross-linked (Glycyl lysine isopeptide (Lys-Gly) (interchain with G-Cter in SUMO2)).

The protein belongs to the eukaryotic ribosomal protein eL18 family. As to quaternary structure, component of the large ribosomal subunit.

The protein localises to the cytoplasm. It is found in the cytosol. It localises to the rough endoplasmic reticulum. In terms of biological role, component of the large ribosomal subunit. The ribosome is a large ribonucleoprotein complex responsible for the synthesis of proteins in the cell. The chain is Large ribosomal subunit protein eL18 (RPL18) from Bos taurus (Bovine).